The sequence spans 520 residues: GMP synthase [glutamine-hydrolyzing] (520 aa).

The Glutamine amidotransferase type-1 domain maps to S9–D202. C86 (nucleophile) is an active-site residue. Residues H176 and E178 contribute to the active site. Residues W203–R395 enclose the GMPS ATP-PPase domain. S230–S236 contributes to the ATP binding site.

Homodimer.

The enzyme catalyses XMP + L-glutamine + ATP + H2O = GMP + L-glutamate + AMP + diphosphate + 2 H(+). Its pathway is purine metabolism; GMP biosynthesis; GMP from XMP (L-Gln route): step 1/1. In terms of biological role, catalyzes the synthesis of GMP from XMP. This chain is GMP synthase [glutamine-hydrolyzing], found in Rhizobium johnstonii (strain DSM 114642 / LMG 32736 / 3841) (Rhizobium leguminosarum bv. viciae).